We begin with the raw amino-acid sequence, 740 residues long: Eukaryotic translation initiation factor 3 subunit B (740 aa).

Residues methionine 1–glutamate 10 are compositionally biased toward polar residues. Residues methionine 1–glutamate 20 form a disordered region. The RRM domain occupies threonine 40–aspartate 126. WD repeat units lie at residues alanine 193–glutamine 230, proline 232–valine 289, glutamate 302–lysine 343, serine 455–alanine 496, isoleucine 513–glutamate 556, and threonine 571–alanine 609. Positions alanine 696–glutamate 721 are disordered.

This sequence belongs to the eIF-3 subunit B family. In terms of assembly, component of the eukaryotic translation initiation factor 3 (eIF-3) complex.

It is found in the cytoplasm. Its function is as follows. RNA-binding component of the eukaryotic translation initiation factor 3 (eIF-3) complex, which is involved in protein synthesis of a specialized repertoire of mRNAs and, together with other initiation factors, stimulates binding of mRNA and methionyl-tRNAi to the 40S ribosome. The eIF-3 complex specifically targets and initiates translation of a subset of mRNAs involved in cell proliferation. In Aspergillus fumigatus (strain ATCC MYA-4609 / CBS 101355 / FGSC A1100 / Af293) (Neosartorya fumigata), this protein is Eukaryotic translation initiation factor 3 subunit B (prt1).